The primary structure comprises 569 residues: Arginine--tRNA ligase (569 aa).

The 'HIGH' region motif lies at 128-138; it reads ANPTGPLHVGH.

The protein belongs to the class-I aminoacyl-tRNA synthetase family. Monomer.

It localises to the cytoplasm. The catalysed reaction is tRNA(Arg) + L-arginine + ATP = L-arginyl-tRNA(Arg) + AMP + diphosphate. The polypeptide is Arginine--tRNA ligase (Paracidovorax citrulli (strain AAC00-1) (Acidovorax citrulli)).